Reading from the N-terminus, the 148-residue chain is WAP four-disulfide core domain protein 12 (148 aa).

The N-terminal stretch at 1 to 23 is a signal peptide; sequence MRSYSFWFLTAFLVFATLALGEA. The region spanning 27 to 74 is the WAP domain; sequence GKEKWGNCPAEKGSCIKSGPSQCHADNDCPGDKKCCFLSCSFKCVSPD. Intrachain disulfides connect Cys-34–Cys-62, Cys-41–Cys-66, Cys-49–Cys-61, and Cys-55–Cys-70. A disordered region spans residues 74-148; sequence DRIRKEGGNE…QEASPQKEWS (75 aa).

The protein localises to the secreted. In terms of biological role, antibacterial protein. Putative acid-stable proteinase inhibitor. The protein is WAP four-disulfide core domain protein 12 (WFDC12) of Lemur catta (Ring-tailed lemur).